The following is a 361-amino-acid chain: MASPDEDGRPSLPNPWDAILEAVKHQLPSLDSDSSASDCEDEELFIFQRNQTVLIPDLSEELADDPAGAWVTSSGSPPGLAAVPVESAMEPWGEWNAWPRPKESAPLEGRAPSKSSSLLRMSAETPPRQDDDAGGTLNTSASQSPRQGPQGEATRSPQEAGLQTEPLGAASQAQEGSDAASRKALRRERRKMIEKDILHKVTWDGRNPACPDASRGKEKACDAVEVPSEGPPGCLPVLSLQELEEWDLDQVLLSLTGREEDRGDGAPGAAWWAAGRLQGQDHTEPSTQDRLMERLSLLCARQSRETCRAQPGYGTARERVGSSSSSGHLGRRPLGLSCPPARVLSVRRLRPLEIRPGPALG.

Disordered regions lie at residues 65–191 (DPAG…ERRK) and 309–334 (AQPG…RRPL). The span at 136–157 (TLNTSASQSPRQGPQGEATRSP) shows a compositional bias: polar residues. Phosphoserine occurs at positions 142 and 144. The span at 321–334 (GSSSSSGHLGRRPL) shows a compositional bias: low complexity.

It is found in the dynein axonemal particle. It localises to the cytoplasm. Functionally, in cyliated cells, dynein axonemal particle-specific protein required for deployment of ODA to the axoneme. Interacts with outer dynein arm (ODA) subunits. This Bos taurus (Bovine) protein is Dynein axonemal assembly factor 8 (DNAAF8).